The chain runs to 353 residues: Lactosylceramide 4-alpha-galactosyltransferase (353 aa).

At 1 to 22 the chain is on the cytoplasmic side; the sequence is MSKPPDLLLRLLRGAPRQRVCT. The helical; Signal-anchor for type II membrane protein transmembrane segment at 23–43 threads the bilayer; the sequence is LFIIGFKFTFFVSIMIYWHVV. Residues 44-353 lie on the Lumenal side of the membrane; sequence GEPKEKGQLY…TTHEAMKMYL (310 aa). A glycan (N-linked (GlcNAc...) asparagine) is linked at Asn121. A DXD motif motif is present at residues 192-194; it reads DTD. Asn203 carries an N-linked (GlcNAc...) asparagine glycan.

It belongs to the glycosyltransferase 32 family.

It localises to the golgi apparatus membrane. The enzyme catalyses a beta-D-Gal-(1-&gt;4)-beta-D-Glc-(1&lt;-&gt;1)-Cer(d18:1(4E)) + UDP-alpha-D-galactose = a globoside Gb3Cer (d18:1(4E)) + UDP + H(+). It catalyses the reaction a beta-D-Gal-(1&lt;-&gt;1')-ceramide + UDP-alpha-D-galactose = alpha-D-Gal-(1-&gt;4)-beta-D-Gal-(1&lt;-&gt;1')-Cer + UDP + H(+). It participates in glycolipid biosynthesis. In terms of biological role, catalyzes the transfer of galactose from UDP-alpha-D-galactose to lactosylceramide/beta-D-galactosyl-(1-&gt;4)-beta-D-glucosyl-(1&lt;-&gt;1)-ceramide(d18:1(4E)) to produce globotriaosylceramide/globoside Gb3Cer (d18:1(4E)). Also able to transfer galactose to galactosylceramide/beta-D-Gal-(1&lt;-&gt;1')-Cer. Globoside Gb3Cer is a glycosphingolipid of the globo serie, one of the major types of neutral root structures of glycosphingolipids, that constitute a significant portion of mammalian cell membranes. The sequence is that of Lactosylceramide 4-alpha-galactosyltransferase (A4GALT) from Pan troglodytes (Chimpanzee).